Consider the following 33-residue polypeptide: Putative tumor antigen NA88-A (33 aa).

As to expression, expressed in testis and melanoma cell lines.

This is Putative tumor antigen NA88-A (VENTXP1) from Homo sapiens (Human).